The primary structure comprises 113 residues: Large ribosomal subunit protein uL22 (113 aa).

The protein belongs to the universal ribosomal protein uL22 family. In terms of assembly, part of the 50S ribosomal subunit.

This protein binds specifically to 23S rRNA; its binding is stimulated by other ribosomal proteins, e.g. L4, L17, and L20. It is important during the early stages of 50S assembly. It makes multiple contacts with different domains of the 23S rRNA in the assembled 50S subunit and ribosome. In terms of biological role, the globular domain of the protein is located near the polypeptide exit tunnel on the outside of the subunit, while an extended beta-hairpin is found that lines the wall of the exit tunnel in the center of the 70S ribosome. The sequence is that of Large ribosomal subunit protein uL22 from Xanthomonas axonopodis pv. citri (strain 306).